A 187-amino-acid polypeptide reads, in one-letter code: Calcium and integrin-binding family member 2 (187 aa).

3 consecutive EF-hand domains span residues 66 to 101, 103 to 138, and 144 to 179; these read KENPFRNRIVESFSEDGQGNLSFNDFVDMFSVLSEM, PRELKAIYAFKIYDFNVDNYICKEDLEKTLNKLTKE, and EVNLVCEKAIEEADLDGDNKLSFADFENMISRAPDF. Residues aspartate 157, aspartate 159, aspartate 161, lysine 163, and aspartate 168 each coordinate Ca(2+).

In terms of assembly, monomer. Homodimer. Enriched in central and striolar hair cells.

It is found in the cytoplasm. Its subcellular location is the cell projection. The protein localises to the stereocilium. It localises to the photoreceptor inner segment. The protein resides in the cilium. It is found in the photoreceptor outer segment. Its subcellular location is the cell membrane. The protein localises to the sarcolemma. In terms of biological role, calcium- and integrin-binding protein. Plays a role in intracellular calcium homeostasis. Critical for proper photoreceptor cell maintenance and function. Essential for development, maintenance and function of mechanosensory hair cells. The sequence is that of Calcium and integrin-binding family member 2 from Danio rerio (Zebrafish).